The sequence spans 165 residues: Thiol peroxidase (165 aa).

The Thioredoxin domain occupies 18 to 164 (RKVGDKAPNF…YEAAIEAAKK (147 aa)). Residue Cys60 is the Cysteine sulfenic acid (-SOH) intermediate of the active site. Cys60 and Cys94 are oxidised to a cystine.

This sequence belongs to the peroxiredoxin family. Tpx subfamily. Homodimer.

The enzyme catalyses a hydroperoxide + [thioredoxin]-dithiol = an alcohol + [thioredoxin]-disulfide + H2O. Thiol-specific peroxidase that catalyzes the reduction of hydrogen peroxide and organic hydroperoxides to water and alcohols, respectively. Plays a role in cell protection against oxidative stress by detoxifying peroxides. This is Thiol peroxidase from Listeria monocytogenes serotype 4b (strain F2365).